The following is a 187-amino-acid chain: Threonylcarbamoyl-AMP synthase (187 aa).

Residues 3–187 (QVTPSQISGI…IQTGHIFRQG (185 aa)) enclose the YrdC-like domain.

This sequence belongs to the SUA5 family. TsaC subfamily.

The protein localises to the cytoplasm. It carries out the reaction L-threonine + hydrogencarbonate + ATP = L-threonylcarbamoyladenylate + diphosphate + H2O. Functionally, required for the formation of a threonylcarbamoyl group on adenosine at position 37 (t(6)A37) in tRNAs that read codons beginning with adenine. Catalyzes the conversion of L-threonine, HCO(3)(-)/CO(2) and ATP to give threonylcarbamoyl-AMP (TC-AMP) as the acyladenylate intermediate, with the release of diphosphate. The protein is Threonylcarbamoyl-AMP synthase of Shewanella amazonensis (strain ATCC BAA-1098 / SB2B).